The sequence spans 248 residues: tRNA pseudouridine synthase A (248 aa).

Residue D53 is the Nucleophile of the active site. Y111 serves as a coordination point for substrate.

This sequence belongs to the tRNA pseudouridine synthase TruA family. As to quaternary structure, homodimer.

The catalysed reaction is uridine(38/39/40) in tRNA = pseudouridine(38/39/40) in tRNA. Its function is as follows. Formation of pseudouridine at positions 38, 39 and 40 in the anticodon stem and loop of transfer RNAs. The protein is tRNA pseudouridine synthase A of Listeria monocytogenes serovar 1/2a (strain ATCC BAA-679 / EGD-e).